Reading from the N-terminus, the 382-residue chain is Per os infectivity factor 2 (382 aa).

Forms the PIF complex together with PIF1 and PIF3. The complex also interacts with per os infectivity factor PIF0.

Functionally, per os infectivity factor that mediates the specific binding of occluded virions (ODV) to the host midgut target cells. The chain is Per os infectivity factor 2 from Autographa californica nuclear polyhedrosis virus (AcMNPV).